Consider the following 294-residue polypeptide: Cyclin-G1 (294 aa).

This sequence belongs to the cyclin family. Cyclin G subfamily. In terms of assembly, binds to B' regulatory B subunits of protein phosphatase A (PP2A) following induction by p53 (in vitro). As to expression, highest levels in kidney, heart and skeletal muscle.

Its subcellular location is the nucleus. Its function is as follows. May play a role in growth regulation. Is associated with G2/M phase arrest in response to DNA damage. May be an intermediate by which p53 mediates its role as an inhibitor of cellular proliferation. The protein is Cyclin-G1 (Ccng1) of Mus musculus (Mouse).